Reading from the N-terminus, the 385-residue chain is Odorant receptor 47a (385 aa).

The Cytoplasmic portion of the chain corresponds to 1 to 33; it reads MDSFLQVQKSTIALLGFDLFSENREMWKRPYRA. The helical transmembrane segment at 34–54 threads the bilayer; that stretch reads MNVFSIAAIFPFILAAVLHNW. Topologically, residues 55 to 62 are extracellular; that stretch reads KNVLLLAD. The chain crosses the membrane as a helical span at residues 63 to 83; that stretch reads AMVALLITILGLFKFSMILYL. Residues 84–129 are Cytoplasmic-facing; it reads RRDFKRLIDKFRLLMSNEAEQGEEYAEILNAANKQDQRMCTLFRTC. The chain crosses the membrane as a helical span at residues 130–150; the sequence is FLLAWALNSVLPLVRMGLSYW. The Extracellular portion of the chain corresponds to 151-175; it reads LAGHAEPELPFPCLFPWNIHIIRNY. Residues 176-196 traverse the membrane as a helical segment; the sequence is VLSFIWSAFASTGVVLPAVSL. Over 197–255 the chain is Cytoplasmic; that stretch reads DTIFCSFTSNLCAFFKIAQYKVVRFKGGSLKESQATLNKVFALYQTSLDMCNDLNQCYQ. The helical transmembrane segment at 256-276 threads the bilayer; the sequence is PIICAQFFISSLQLCMLGYLF. At 277–284 the chain is on the extracellular side; the sequence is SITFAQTE. A helical transmembrane segment spans residues 285 to 305; that stretch reads GVYYASFIATIIIQAYIYCYC. Over 306–357 the chain is Cytoplasmic; sequence GENLKTESASFEWAIYDSPWHESLGAGGASTSICRSLLISMMRAHRGFRITG. Residues 358–378 traverse the membrane as a helical segment; that stretch reads YFFEANMEAFSSIVRTAMSYI. The Extracellular portion of the chain corresponds to 379 to 385; it reads TMLRSFS.

The protein belongs to the insect chemoreceptor superfamily. Heteromeric odorant receptor channel (TC 1.A.69) family. Or1a subfamily. Interacts with Orco. Complexes exist early in the endomembrane system in olfactory sensory neurons (OSNs), coupling these complexes to the conserved ciliary trafficking pathway. In terms of tissue distribution, expressed with Orco in 40 olfactory receptor neurons in a broad area across the antenna, including both anterior and posterior faces. This expression pattern matches the distribution of the small sensilla basiconica. Expression in the antenna is observed late in antennal development at 93 hours APF.

Its subcellular location is the cell membrane. Functionally, odorant receptor which mediates acceptance or avoidance behavior, depending on its substrates. The odorant receptor repertoire encodes a large collection of odor stimuli that vary widely in identity, intensity, and duration. Complexes with Orco to form odorant-sensing units, providing sensitive and prolonged odorant signaling and calcium permeability. They are necessary and sufficient to promote functional reconstitution of odor-evoked signaling in sensory neurons that normally respond only to carbon dioxide. Involved in the behavioral responses to esters. Involved in the behavioral responses to pentyl acetate. In Drosophila melanogaster (Fruit fly), this protein is Odorant receptor 47a (Or47a).